The primary structure comprises 132 residues: Large ribosomal subunit protein uL14 (132 aa).

The protein belongs to the universal ribosomal protein uL14 family. In terms of assembly, the L3/L14/L24e cluster may contact the 16S rRNA in 2 intersubunit bridges. Part of the 50S ribosomal subunit. Forms a cluster with proteins L3 and L24e.

In terms of biological role, forms part of two intersubunit bridges in the 70S ribosome. Binds to 23S rRNA. This chain is Large ribosomal subunit protein uL14, found in Haloarcula marismortui (strain ATCC 43049 / DSM 3752 / JCM 8966 / VKM B-1809) (Halobacterium marismortui).